Consider the following 276-residue polypeptide: Ribosomal RNA small subunit methyltransferase A (276 aa).

6 residues coordinate S-adenosyl-L-methionine: Asn27, Leu29, Gly54, Glu75, Asp101, and Asn123.

It belongs to the class I-like SAM-binding methyltransferase superfamily. rRNA adenine N(6)-methyltransferase family. RsmA subfamily.

It is found in the cytoplasm. The catalysed reaction is adenosine(1518)/adenosine(1519) in 16S rRNA + 4 S-adenosyl-L-methionine = N(6)-dimethyladenosine(1518)/N(6)-dimethyladenosine(1519) in 16S rRNA + 4 S-adenosyl-L-homocysteine + 4 H(+). In terms of biological role, specifically dimethylates two adjacent adenosines (A1518 and A1519) in the loop of a conserved hairpin near the 3'-end of 16S rRNA in the 30S particle. May play a critical role in biogenesis of 30S subunits. This Bartonella tribocorum (strain CIP 105476 / IBS 506) protein is Ribosomal RNA small subunit methyltransferase A.